The chain runs to 415 residues: Serine hydroxymethyltransferase (415 aa).

Residues leucine 121 and 125 to 127 each bind (6S)-5,6,7,8-tetrahydrofolate; that span reads GHL. Lysine 230 carries the post-translational modification N6-(pyridoxal phosphate)lysine. (6S)-5,6,7,8-tetrahydrofolate is bound at residue 355–357; the sequence is SPF.

It belongs to the SHMT family. Homodimer. Pyridoxal 5'-phosphate is required as a cofactor.

Its subcellular location is the cytoplasm. The enzyme catalyses (6R)-5,10-methylene-5,6,7,8-tetrahydrofolate + glycine + H2O = (6S)-5,6,7,8-tetrahydrofolate + L-serine. It participates in one-carbon metabolism; tetrahydrofolate interconversion. The protein operates within amino-acid biosynthesis; glycine biosynthesis; glycine from L-serine: step 1/1. Its function is as follows. Catalyzes the reversible interconversion of serine and glycine with tetrahydrofolate (THF) serving as the one-carbon carrier. This reaction serves as the major source of one-carbon groups required for the biosynthesis of purines, thymidylate, methionine, and other important biomolecules. Also exhibits THF-independent aldolase activity toward beta-hydroxyamino acids, producing glycine and aldehydes, via a retro-aldol mechanism. The protein is Serine hydroxymethyltransferase of Lactococcus lactis subsp. cremoris (strain SK11).